A 457-amino-acid chain; its full sequence is Argininosuccinate lyase (457 aa).

This sequence belongs to the lyase 1 family. Argininosuccinate lyase subfamily.

It is found in the cytoplasm. It catalyses the reaction 2-(N(omega)-L-arginino)succinate = fumarate + L-arginine. Its pathway is amino-acid biosynthesis; L-arginine biosynthesis; L-arginine from L-ornithine and carbamoyl phosphate: step 3/3. The sequence is that of Argininosuccinate lyase from Klebsiella pneumoniae subsp. pneumoniae (strain ATCC 700721 / MGH 78578).